The primary structure comprises 673 residues: MGKDVALDFLPSSLYSCTCSCDGKLAFCDSEKVQILVPSTEANTPKFMKALAYLDDVEDELPNCQMLAPNELRLGDLTPSVISRYVVWSPTGLADNYDPLLTVLTNRHRVYFFSSSSRVLHQKWTCVAQMSTHLPSDPLELCRIHSVAWSPLVSLPSSSPWGVCLFALGAESGHVHLSIMSHSSTPFFKSFDLNCSWVVQLSFSSWNVVGDSATCLLSCSSRNGEIRILKIAISSHSDTFDTAMQELPFSLDYRPFSPLLAWSSPLANVEYLALVYPGHLFAFRYDKSLGKFCSFLNHNLLSLCSPSGVLFGHNDIDTIYVYILTHSGTLETFSLLDNSISMLDSPERHVLEKFLNNHLQNYGSVSDDSIKTLKIHGFCPSPYLSSAALHFSISYPASFTYVVTAAERSYFNFIPSLFSKSVFSHMITSSLNNLCVAPSAGCLLEISLMNDTLKEKTDIFTMLTNSLSSFLVTDYDFFLELKHLIDISSLSNLYLDSSLNAMRLLYGWSVYKQKALDATLLNSLRYRLTLYIMLYTLSQISLDPSYLTSDCKAVLRNFVSFTYKELAEVPIAMEVANEIAKSLEVSSDFSETCPACEATVQFNNTSLATCDNGHVWRRCSVTMLLLSQKAAKYCAVCNSIVAIFNPSQTKCLLADLQNELSICFYCGGHFLVS.

In terms of assembly, may be a component of the TFIIIC complex.

The protein localises to the nucleus. The chain is Putative transcription factor tau subunit sfc9 from Schizosaccharomyces pombe (strain 972 / ATCC 24843) (Fission yeast).